The following is a 134-amino-acid chain: 6,7-dimethyl-8-ribityllumazine synthase (134 aa).

Residues Phe12, 44-46 (VFD), and 68-70 (SVI) contribute to the 5-amino-6-(D-ribitylamino)uracil site. Residue 73-74 (ET) coordinates (2S)-2-hydroxy-3-oxobutyl phosphate. The active-site Proton donor is the His76. Leu101 contributes to the 5-amino-6-(D-ribitylamino)uracil binding site. Position 116 (Arg116) interacts with (2S)-2-hydroxy-3-oxobutyl phosphate.

This sequence belongs to the DMRL synthase family.

It catalyses the reaction (2S)-2-hydroxy-3-oxobutyl phosphate + 5-amino-6-(D-ribitylamino)uracil = 6,7-dimethyl-8-(1-D-ribityl)lumazine + phosphate + 2 H2O + H(+). It functions in the pathway cofactor biosynthesis; riboflavin biosynthesis; riboflavin from 2-hydroxy-3-oxobutyl phosphate and 5-amino-6-(D-ribitylamino)uracil: step 1/2. Its function is as follows. Catalyzes the formation of 6,7-dimethyl-8-ribityllumazine by condensation of 5-amino-6-(D-ribitylamino)uracil with 3,4-dihydroxy-2-butanone 4-phosphate. This is the penultimate step in the biosynthesis of riboflavin. This is 6,7-dimethyl-8-ribityllumazine synthase from Methanosarcina mazei (strain ATCC BAA-159 / DSM 3647 / Goe1 / Go1 / JCM 11833 / OCM 88) (Methanosarcina frisia).